The sequence spans 240 residues: Mediator of RNA polymerase II transcription subunit 19-B (240 aa).

The span at 1 to 14 shows a compositional bias: polar residues; that stretch reads MTEIFSSLYGQPDS. Disordered stretches follow at residues 1-29 and 168-240; these read MTEI…GSGK and PKKK…SSLR. Composition is skewed to basic residues over residues 168 to 180 and 209 to 221; these read PKKK…KHHR and KKKK…KKNR.

Belongs to the Mediator complex subunit 19 family. As to quaternary structure, component of the Mediator complex.

It is found in the nucleus. Component of the Mediator complex, a coactivator involved in the regulated transcription of nearly all RNA polymerase II-dependent genes. Mediator functions as a bridge to convey information from gene-specific regulatory proteins to the basal RNA polymerase II transcription machinery. Mediator is recruited to promoters by direct interactions with regulatory proteins and serves as a scaffold for the assembly of a functional preinitiation complex with RNA polymerase II and the general transcription factors. The protein is Mediator of RNA polymerase II transcription subunit 19-B (med19b) of Danio rerio (Zebrafish).